Here is a 495-residue protein sequence, read N- to C-terminus: Pre-glycoprotein polyprotein GP complex (495 aa).

The N-myristoyl glycine; by host moiety is linked to residue Gly2. Residues 2-17 (GQFISFMQEIPIFLQE) are Extracellular-facing. A helical transmembrane segment spans residues 18–33 (ALNIALVAVSLICIVK). Residues 34-58 (GLVNLYRCGLFQLMVFLVLAGRSCS) lie on the Cytoplasmic side of the membrane. Cys57 contacts Zn(2+). Residues 59-434 (EETFKIGMHT…QGRTPITLVD (376 aa)) lie on the Extracellular side of the membrane. Cystine bridges form between Cys92–Cys236, Cys281–Cys294, Cys303–Cys312, and Cys366–Cys387. Residues Asn95 and Asn188 are each glycosylated (N-linked (GlcNAc...) asparagine; by host). Asn367, Asn375, Asn392, and Asn397 each carry an N-linked (GlcNAc...) asparagine; by host glycan. The chain crosses the membrane as a helical span at residues 435–455 (ICFWSTVFFTSTLFLHLIGFP). The Cytoplasmic segment spans residues 456 to 495 (THEHIRGEGCPLPHRLNSMGGCRCGKYLPLKKPTIWHRRH). His457, His459, Cys465, His469, Cys477, Cys479, and His495 together coordinate Zn(2+).

The protein belongs to the arenaviridae GPC protein family. Interacts with glycoprotein G2. Part of the GP complex (GP-C) together with glycoprotein G1 and glycoprotein G2. The GP-complex interacts with protein Z, which interacts with ribonucleocapsid; these interactions may induce virion budding. As to quaternary structure, homotrimer; disulfide-linked. In pre-fusion state, G1 homotrimers bind G2 homotrimers via ionic interactions. Part of the GP complex (GP-C) together with glycoprotein G2 and the stable signal peptide. The GP-complex interacts with protein Z, which interacts with ribonucleocapsid; these interactions may induce virion budding. In terms of assembly, homotrimer. Interacts with the stable signal peptide. In pre-fusion state, G2 homotrimers bind G1 homotrimers via ionic interactions. Part of the GP complex (GP-C) together with glycoprotein G1 and the stable signal peptide. Acidification in the endosome triggers rearrangements, which ultimately leads to a 6 helix bundle formed by the two heptad repeat domains (HR1 and HR2) in post-fusion state. The GP-complex interacts with protein Z, which interacts with ribonucleocapsid; these interactions may induce virion budding. In terms of processing, specific enzymatic cleavages in vivo yield mature proteins. GP-C polyprotein is cleaved in the endoplasmic reticulum by the host protease MBTPS1. Only cleaved glycoprotein is incorporated into virions. The SSP remains stably associated with the GP complex following cleavage by signal peptidase and plays crucial roles in the trafficking of GP through the secretory pathway. Post-translationally, myristoylation is necessary for GP2-mediated fusion activity.

It localises to the virion membrane. The protein localises to the host endoplasmic reticulum membrane. The protein resides in the host Golgi apparatus membrane. It is found in the host cell membrane. Functions as a cleaved signal peptide that is retained as the third component of the GP complex (GP-C). Helps to stabilize the spike complex in its native conformation. The SSP is required for efficient glycoprotein expression, post-translational maturation cleavage of G1 and G2, glycoprotein transport to the cell surface plasma membrane, formation of infectious virus particles, and acid pH-dependent glycoprotein-mediated cell fusion. In terms of biological role, forms the virion spikes together with glycoprotein G2. The glycoprotein spike trimers are connected to the underlying matrix. Interacts with the host receptor leading to virus endocytosis. Its function is as follows. Forms the virion spikes together with glycoprotein G1. The glycoprotein spike trimers are connected to the underlying matrix. Class I viral fusion protein that directs fusion of viral and host endosomal membranes, leading to delivery of the nucleocapsid into the cytoplasm. Membrane fusion is mediated by irreversible conformational changes induced by acidification. The polypeptide is Pre-glycoprotein polyprotein GP complex (Tacaribe virus (strain Franze-Fernandez) (TCRV)).